We begin with the raw amino-acid sequence, 554 residues long: DnaJ homolog subfamily C member 1 (554 aa).

Residues Met-1–Gly-47 form the signal peptide. At Trp-48–Glu-153 the chain is on the lumenal side. The 65-residue stretch at Asn-65–Leu-129 folds into the J domain. A helical transmembrane segment spans residues Leu-154–Tyr-174. Over Leu-175 to Ser-554 the chain is Cytoplasmic. Residues Lys-325–Thr-379 form the SANT 1 domain. A Phosphoserine modification is found at Ser-381. The span at Ser-392–Thr-405 shows a compositional bias: polar residues. The segment at Ser-392 to Asn-500 is disordered. The span at Ala-421–Glu-432 shows a compositional bias: acidic residues. Ser-430 is modified (phosphoserine). The segment covering Ala-455–Asp-472 has biased composition (basic and acidic residues). The span at Ile-473–Glu-482 shows a compositional bias: acidic residues. Phosphoserine occurs at positions 479, 480, 484, and 492. A compositionally biased stretch (basic and acidic residues) spans Glu-483 to Glu-494. The SANT 2 domain maps to Ser-492 to Gln-547.

Interacts (via J domain) with HSPA5. Interacts (via cytosolic domain) with ribosomes. Interacts (via SANT 2 domain) with SERPINA3; the interaction delays the formation of the covalent inhibitory complex SERPINA3-chymotrypsin, but does not alter the catalytic activity of SERPINA3. Interacts (via SANT 2 domain) with ITIH4 (via C-terminus); the interaction protects ITIH4 against in vitro cleavage by kallikrein.

The protein resides in the endoplasmic reticulum membrane. It localises to the nucleus membrane. It is found in the microsome membrane. Functionally, may modulate protein synthesis. This chain is DnaJ homolog subfamily C member 1 (DNAJC1), found in Homo sapiens (Human).